The sequence spans 343 residues: tRNA N6-adenosine threonylcarbamoyltransferase (343 aa).

Fe cation-binding residues include His111 and His115. Residues 134–138 (LVSGG), Asp167, Gly180, and Asn276 each bind substrate. Asp304 provides a ligand contact to Fe cation.

Belongs to the KAE1 / TsaD family. Requires Fe(2+) as cofactor.

The protein localises to the cytoplasm. It catalyses the reaction L-threonylcarbamoyladenylate + adenosine(37) in tRNA = N(6)-L-threonylcarbamoyladenosine(37) in tRNA + AMP + H(+). Functionally, required for the formation of a threonylcarbamoyl group on adenosine at position 37 (t(6)A37) in tRNAs that read codons beginning with adenine. Is involved in the transfer of the threonylcarbamoyl moiety of threonylcarbamoyl-AMP (TC-AMP) to the N6 group of A37, together with TsaE and TsaB. TsaD likely plays a direct catalytic role in this reaction. This is tRNA N6-adenosine threonylcarbamoyltransferase from Hahella chejuensis (strain KCTC 2396).